The sequence spans 506 residues: MAFLLSFLILAFLITIIFFLSSSSTKKVQENTTYGPPSYPLIGSILSFNKNRHRLLQWYTELLRLSPSQTILVPLLGNRRTIITTNPLNVEYILKTNFFNFPKGKPFTDLLGDLLGGGIFNVDGHSWSSQRKLASHEFSTRSLRSFAFEVLKDEVENRLVPVLSTAADVGTTVDLQDVLKRFAFDVVCKVSLGWDPDCLDLTRPVNPLVEAFDTAAEISARRATEPIYAVWKTKRVLNVGSERKLREAIRTVHVLVSEIVRAKKKSLEIGTGAEAKQDLLSRFLAAGHNGEAVRDMVISFIMAGRDTTSAAMTWLFWLLTENDDVERKILEEVDPLVSLGLGFEDLKEMAYTKACLCEAMRLYPPVSWDSKHAANDDVLPDGTRVKRGDKVTYFPYGMGRMETLWGTDSEEFNPNRWFDSEPGSTRPVLKPISPYKFPVFQAGPRVCVGKEMAFMQMKYVVGSVLSRFEIVPVNKDRPVFVPLLTAHMAGGLKVKIKRRSHILNNV.

Residues 2–22 form a helical membrane-spanning segment; it reads AFLLSFLILAFLITIIFFLSS. Position 447 (cysteine 447) interacts with heme.

It belongs to the cytochrome P450 family. The cofactor is heme.

It localises to the membrane. Its subcellular location is the endoplasmic reticulum membrane. It catalyses the reaction a jasmonyl-L-amino acid + reduced [NADPH--hemoprotein reductase] + O2 = a 12-hydroxyjasmonyl-L-alpha-amino acid + oxidized [NADPH--hemoprotein reductase] + H2O + H(+). It carries out the reaction L-isoleucine-(+)-7-isojasmonate + NADPH + O2 + H(+) = L-isoleucine-(+)-12-hydroxy-7-isojasmonate + NADP(+) + H2O. The catalysed reaction is a jasmonyl-L-isoleucinate + NADPH + O2 + H(+) = L-isoleucine-12-hydroxyjasmonate + NADP(+) + H2O. Hydroxylase involved in the oxidation of the plant hormone jasmonoyl-L-isoleucine (JA-Ile), a bioactive phytohormone of the jasmonate-mediated signaling pathway. Converts JA-Ile to 12-hydroxy-JA-Ile. Exerts negative feedback control on JA-Ile levels and plays a key role in attenuation of jasmonate responses. Negatively regulates the expression of wound-induced genes TIFY11A/JAZ5, TIFY5A/JAZ8 and TIFY5A/JAZ10. Catalyzes the hydroxylation of jasmonoyl-L-valine (JA-Val), jasmonoyl-L-leucine (JA-Leu) and jasmonoyl-L-phenylalanine (JA-Phe) in vitro. Converts JA-Val, JA-Leu and JA-Phe to 12-hydroxy-JA-Val, 12-hydroxy-JA-Leu and 12-hydroxy-JA-Phe, respectively. In Arabidopsis thaliana (Mouse-ear cress), this protein is Cytochrome P450 94B3.